A 211-amino-acid chain; its full sequence is Thiamine-phosphate synthase (211 aa).

4-amino-2-methyl-5-(diphosphooxymethyl)pyrimidine contacts are provided by residues 37–41 and asparagine 69; that span reads QLRIK. The Mg(2+) site is built by aspartate 70 and aspartate 89. Serine 108 is a 4-amino-2-methyl-5-(diphosphooxymethyl)pyrimidine binding site. Residue 134–136 coordinates 2-[(2R,5Z)-2-carboxy-4-methylthiazol-5(2H)-ylidene]ethyl phosphate; the sequence is TQT. Lysine 137 is a 4-amino-2-methyl-5-(diphosphooxymethyl)pyrimidine binding site. 2-[(2R,5Z)-2-carboxy-4-methylthiazol-5(2H)-ylidene]ethyl phosphate-binding positions include glycine 166 and 186-187; that span reads VS.

This sequence belongs to the thiamine-phosphate synthase family. It depends on Mg(2+) as a cofactor.

The catalysed reaction is 2-[(2R,5Z)-2-carboxy-4-methylthiazol-5(2H)-ylidene]ethyl phosphate + 4-amino-2-methyl-5-(diphosphooxymethyl)pyrimidine + 2 H(+) = thiamine phosphate + CO2 + diphosphate. The enzyme catalyses 2-(2-carboxy-4-methylthiazol-5-yl)ethyl phosphate + 4-amino-2-methyl-5-(diphosphooxymethyl)pyrimidine + 2 H(+) = thiamine phosphate + CO2 + diphosphate. It catalyses the reaction 4-methyl-5-(2-phosphooxyethyl)-thiazole + 4-amino-2-methyl-5-(diphosphooxymethyl)pyrimidine + H(+) = thiamine phosphate + diphosphate. It participates in cofactor biosynthesis; thiamine diphosphate biosynthesis; thiamine phosphate from 4-amino-2-methyl-5-diphosphomethylpyrimidine and 4-methyl-5-(2-phosphoethyl)-thiazole: step 1/1. In terms of biological role, condenses 4-methyl-5-(beta-hydroxyethyl)thiazole monophosphate (THZ-P) and 2-methyl-4-amino-5-hydroxymethyl pyrimidine pyrophosphate (HMP-PP) to form thiamine monophosphate (TMP). The polypeptide is Thiamine-phosphate synthase (Escherichia coli O9:H4 (strain HS)).